A 357-amino-acid chain; its full sequence is Glucose 1-dehydrogenase (357 aa).

Residue D38 coordinates Zn(2+). Substrate-binding residues include T40 and H49. Residues H63 and E64 each contribute to the Zn(2+) site. Positions 114 and 150 each coordinate substrate. E150 is a binding site for Zn(2+). NADP(+) is bound by residues 181–184 (NGSL), 207–208 (RR), S228, 272–274 (LGV), and 301–303 (SVN). Position 303 (N303) interacts with substrate.

The protein belongs to the zinc-containing alcohol dehydrogenase family. Glucose 1-dehydrogenase subfamily. As to quaternary structure, homodimer. Zn(2+) is required as a cofactor.

The catalysed reaction is D-glucose + NAD(+) = D-glucono-1,5-lactone + NADH + H(+). The enzyme catalyses D-glucose + NADP(+) = D-glucono-1,5-lactone + NADPH + H(+). Its activity is regulated as follows. Activated by molar concentrations of KCl or NaCl. Inhibited by EDTA in vitro. Its function is as follows. Catalyzes the NAD(P)(+)-dependent oxidation of D-glucose to D-gluconate. Displays broad substrate specificity since it is able to catalyze the oxidation of a number of alternative aldose sugars, such as D-xylose, D-galactose, and D-fucose, to the corresponding glyconate. Can utilize both NAD(+) and NADP(+) as electron acceptor, with a preference for NADP(+). Physiologically, seems to be involved in the degradation of glucose through a modified Entner-Doudoroff pathway. The sequence is that of Glucose 1-dehydrogenase from Haloferax mediterranei (strain ATCC 33500 / DSM 1411 / JCM 8866 / NBRC 14739 / NCIMB 2177 / R-4) (Halobacterium mediterranei).